The chain runs to 326 residues: Vitamin B12 import system permease protein BtuC (326 aa).

9 helical membrane passes run 15–35 (WLLC…CAGE), 61–81 (LAVL…QALF), 88–108 (PGLL…VLLG), 112–132 (LPNW…TLIL), 146–166 (LLAG…AIYF), 184–204 (GGVD…LLWI), 240–260 (GWMV…GLVI), 274–294 (VLLP…DVVA), and 302–322 (ELPI…WLLL).

The protein belongs to the binding-protein-dependent transport system permease family. FecCD subfamily. In terms of assembly, the complex is composed of two ATP-binding proteins (BtuD), two transmembrane proteins (BtuC) and a solute-binding protein (BtuF).

It localises to the cell inner membrane. Its function is as follows. Part of the ABC transporter complex BtuCDF involved in vitamin B12 import. Involved in the translocation of the substrate across the membrane. This is Vitamin B12 import system permease protein BtuC from Escherichia coli O17:K52:H18 (strain UMN026 / ExPEC).